A 419-amino-acid polypeptide reads, in one-letter code: UDP-N-acetylglucosamine 1-carboxyvinyltransferase (419 aa).

22–23 (KN) is a phosphoenolpyruvate binding site. Arginine 91 contacts UDP-N-acetyl-alpha-D-glucosamine. The active-site Proton donor is the cysteine 115. Residue cysteine 115 is modified to 2-(S-cysteinyl)pyruvic acid O-phosphothioketal. UDP-N-acetyl-alpha-D-glucosamine contacts are provided by residues 120–124 (RPVDL), 160–163 (KVSV), aspartate 305, and valine 327.

The protein belongs to the EPSP synthase family. MurA subfamily.

The protein resides in the cytoplasm. The enzyme catalyses phosphoenolpyruvate + UDP-N-acetyl-alpha-D-glucosamine = UDP-N-acetyl-3-O-(1-carboxyvinyl)-alpha-D-glucosamine + phosphate. Its pathway is cell wall biogenesis; peptidoglycan biosynthesis. Functionally, cell wall formation. Adds enolpyruvyl to UDP-N-acetylglucosamine. This chain is UDP-N-acetylglucosamine 1-carboxyvinyltransferase, found in Salmonella arizonae (strain ATCC BAA-731 / CDC346-86 / RSK2980).